A 303-amino-acid chain; its full sequence is MVKYILKRLGLLLLTLFLIVTLTFFMMQVMPGTPFSNPKLTPDQLEILKHAYGLDKPLWQQYFIYVGHMFTGNFGTSFIYTNQPVITMIAQRLPVSMQLGTQALILGTVLGALMGKASARRKNGLLDGIFGFLSVLGISVPSFVIGTLILLYLGFNLNLFPISGWGTFSQTIMPTIALSFAPMAVVTRFVRSEMIESLSSDYILLARAKGLSEKEVVNKHALRNSLIPMLTLIGPMAAGLLTGSVLIEKIFSIPGIGAQFVDSIPAKDFPVIMATTIVYAVILMVFILVTDILTAIVDPRVRL.

The next 7 helical transmembrane spans lie at 9 to 29 (LGLL…MMQV), 62 to 82 (YFIY…IYTN), 93 to 113 (LPVS…LGAL), 129 to 149 (IFGF…GTLI), 166 to 186 (GTFS…MAVV), 227 to 247 (IPML…SVLI), and 269 to 289 (FPVI…FILV). The region spanning 93-290 (LPVSMQLGTQ…VILMVFILVT (198 aa)) is the ABC transmembrane type-1 domain.

The protein belongs to the binding-protein-dependent transport system permease family. OppBC subfamily. The complex is composed of two ATP-binding proteins (DppD and DppF), two transmembrane proteins (DppB and DppC) and a solute-binding protein (DppA).

It localises to the cell membrane. In terms of biological role, part of the ABC transporter DppABCDF involved in dipeptide transport. Responsible for the translocation of the substrate across the membrane. The protein is Dipeptide transport system permease protein DppB of Lactococcus lactis subsp. cremoris (strain MG1363).